The primary structure comprises 67 residues: Kappa-conotoxin-like 2 (67 aa).

A signal peptide spans 1-26 (MMFRLTSVSCFLLVIACLNLFQVVLT). 4 disulfides stabilise this stretch: C29-C43, C36-C48, C42-C51, and C47-C55. At F59 the chain carries Phenylalanine amide. Residues 63–67 (ATFQE) constitute a propeptide that is removed on maturation.

It belongs to the conotoxin I2 superfamily. As to expression, expressed by the venom duct.

The protein localises to the secreted. Its function is as follows. Inhibits the vertebrate voltage-gated potassium channels Kv1.1/KCNA1 and Kv1.3/KCNA3. The chain is Kappa-conotoxin-like 2 from Conus vexillum (Flag cone).